The primary structure comprises 197 residues: Recombination protein RecR (197 aa).

The C4-type zinc finger occupies 56–71 (CSVCGNFDTIDPCAIC). Residues 79 to 174 (SMLCVVEDVA…TVSGLAHGVP (96 aa)) form the Toprim domain.

Belongs to the RecR family.

May play a role in DNA repair. It seems to be involved in an RecBC-independent recombinational process of DNA repair. It may act with RecF and RecO. This is Recombination protein RecR from Paramagnetospirillum magneticum (strain ATCC 700264 / AMB-1) (Magnetospirillum magneticum).